Here is a 79-residue protein sequence, read N- to C-terminus: Major outer membrane lipoprotein Lpp 2 (79 aa).

Positions 1–21 (MNRTNKLILGAVVLGSTLLAG) are cleaved as a signal peptide. Cys22 carries N-palmitoyl cysteine lipidation. Residue Cys22 is the site of S-diacylglycerol cysteine attachment. 2 consecutive repeats follow at residues 25–35 (NAKIDQLSSDV) and 39–49 (SAKVDQLSNDV). Residues 28–69 (IDQLSSDVQTLSAKVDQLSNDVNAMRSDVQAAKDDAARANQR) are a coiled coil. An N6-murein peptidoglycan lysine modification is found at Lys79.

This sequence belongs to the Lpp family. Homotrimer.

The protein localises to the cell outer membrane. It is found in the secreted. The protein resides in the cell wall. Functionally, a highly abundant outer membrane lipoprotein that controls the distance between the inner and outer membranes. The only protein known to be covalently linked to the peptidoglycan network (PGN). Also non-covalently binds the PGN. The link between the cell outer membrane and PGN contributes to maintenance of the structural and functional integrity of the cell envelope, and maintains the correct distance between the PGN and the outer membrane. This chain is Major outer membrane lipoprotein Lpp 2, found in Salmonella typhi.